The chain runs to 382 residues: Serine/threonine-protein phosphatase 2A activator 2 (382 aa).

The tract at residues 363–382 (SHKGVPTLGNRPGIKPIPFD) is disordered.

Belongs to the PTPA-type PPIase family.

It localises to the cytoplasm. The catalysed reaction is [protein]-peptidylproline (omega=180) = [protein]-peptidylproline (omega=0). Functionally, PPIases accelerate the folding of proteins. It catalyzes the cis-trans isomerization of proline imidic peptide bonds in oligopeptides. Acts as a regulatory subunit for PP2A-like phosphatases modulating their activity or substrate specificity, probably by inducing a conformational change in the catalytic subunit, a direct target of the PPIase. Can reactivate inactive phosphatase PP2A-phosphatase methylesterase complexes (PP2Ai) in presence of ATP and Mg(2+) by dissociating the inactive form from the complex. This Cryptococcus neoformans var. neoformans serotype D (strain B-3501A) (Filobasidiella neoformans) protein is Serine/threonine-protein phosphatase 2A activator 2 (RRD2).